A 158-amino-acid polypeptide reads, in one-letter code: Ribosome maturation factor RimP (158 aa).

This sequence belongs to the RimP family.

It localises to the cytoplasm. Functionally, required for maturation of 30S ribosomal subunits. This chain is Ribosome maturation factor RimP, found in Streptococcus suis (strain 98HAH33).